The following is a 1198-amino-acid chain: DNA polymerase II large subunit (1198 aa).

2 disordered regions span residues 281–332 (YKTG…PQKK) and 534–553 (HWAETDGAQQTRPPDGAAES). Residues 286-319 (DTDEADADSDDGTDEDAADDSDIDDSSAGDEEAD) show a composition bias toward acidic residues.

Belongs to the archaeal DNA polymerase II family. Heterodimer of a large subunit and a small subunit.

The catalysed reaction is DNA(n) + a 2'-deoxyribonucleoside 5'-triphosphate = DNA(n+1) + diphosphate. The enzyme catalyses Exonucleolytic cleavage in the 3'- to 5'-direction to yield nucleoside 5'-phosphates.. In terms of biological role, possesses two activities: a DNA synthesis (polymerase) and an exonucleolytic activity that degrades single-stranded DNA in the 3'- to 5'-direction. Has a template-primer preference which is characteristic of a replicative DNA polymerase. The polypeptide is DNA polymerase II large subunit (Natronomonas pharaonis (strain ATCC 35678 / DSM 2160 / CIP 103997 / JCM 8858 / NBRC 14720 / NCIMB 2260 / Gabara) (Halobacterium pharaonis)).